The sequence spans 114 residues: Large ribosomal subunit protein bL19 (114 aa).

This sequence belongs to the bacterial ribosomal protein bL19 family.

In terms of biological role, this protein is located at the 30S-50S ribosomal subunit interface and may play a role in the structure and function of the aminoacyl-tRNA binding site. This Bacillus cytotoxicus (strain DSM 22905 / CIP 110041 / 391-98 / NVH 391-98) protein is Large ribosomal subunit protein bL19.